Reading from the N-terminus, the 122-residue chain is Large ribosomal subunit protein uL14 (122 aa).

Belongs to the universal ribosomal protein uL14 family. In terms of assembly, part of the 50S ribosomal subunit. Forms a cluster with proteins L3 and L19. In the 70S ribosome, L14 and L19 interact and together make contacts with the 16S rRNA in bridges B5 and B8.

Functionally, binds to 23S rRNA. Forms part of two intersubunit bridges in the 70S ribosome. The polypeptide is Large ribosomal subunit protein uL14 (Staphylococcus aureus (strain MW2)).